Here is a 256-residue protein sequence, read N- to C-terminus: Small ribosomal subunit protein uS2 (256 aa).

This sequence belongs to the universal ribosomal protein uS2 family.

The polypeptide is Small ribosomal subunit protein uS2 (Geotalea uraniireducens (strain Rf4) (Geobacter uraniireducens)).